The primary structure comprises 281 residues: Acetylglutamate kinase (281 aa).

Residues 64–65, Arg-86, and Asn-179 each bind substrate; that span reads GG.

This sequence belongs to the acetylglutamate kinase family. ArgB subfamily.

The protein resides in the cytoplasm. The catalysed reaction is N-acetyl-L-glutamate + ATP = N-acetyl-L-glutamyl 5-phosphate + ADP. It functions in the pathway amino-acid biosynthesis; L-arginine biosynthesis; N(2)-acetyl-L-ornithine from L-glutamate: step 2/4. Its function is as follows. Catalyzes the ATP-dependent phosphorylation of N-acetyl-L-glutamate. This is Acetylglutamate kinase from Campylobacter curvus (strain 525.92).